A 249-amino-acid polypeptide reads, in one-letter code: NH(3)-dependent NAD(+) synthetase (249 aa).

Mg(2+) is bound at residue aspartate 34. A deamido-NAD(+)-binding site is contributed by arginine 110. Residue threonine 130 participates in ATP binding. Residue glutamate 135 coordinates Mg(2+). The deamido-NAD(+) site is built by lysine 143 and aspartate 150. ATP-binding residues include lysine 159 and serine 181. 232–233 serves as a coordination point for deamido-NAD(+); that stretch reads HK.

This sequence belongs to the NAD synthetase family. Homodimer.

The catalysed reaction is deamido-NAD(+) + NH4(+) + ATP = AMP + diphosphate + NAD(+) + H(+). Its pathway is cofactor biosynthesis; NAD(+) biosynthesis; NAD(+) from deamido-NAD(+) (ammonia route): step 1/1. Functionally, catalyzes the ATP-dependent amidation of deamido-NAD to form NAD. Uses ammonia as a nitrogen source. This is NH(3)-dependent NAD(+) synthetase from Picrophilus torridus (strain ATCC 700027 / DSM 9790 / JCM 10055 / NBRC 100828 / KAW 2/3).